The chain runs to 631 residues: Peptide-N(4)-(N-acetyl-beta-glucosaminyl)asparagine amidase (631 aa).

The PUB domain maps to 34–97 (EAVRILLVLL…PSSNAYTLPT (64 aa)). Phosphoserine is present on Ser-126. The Zn(2+) site is built by Cys-246, Cys-249, Cys-272, and Cys-273. Residue Cys-296 is the Nucleophile of the active site. Catalysis depends on residues His-323 and Asp-340. Residues 441–631 (ELKGRSSGSL…YPFDLQVQLH (191 aa)) enclose the PAW domain.

This sequence belongs to the transglutaminase-like superfamily. PNGase family. Requires Zn(2+) as cofactor.

It localises to the cytoplasm. It carries out the reaction Hydrolysis of an N(4)-(acetyl-beta-D-glucosaminyl)asparagine residue in which the glucosamine residue may be further glycosylated, to yield a (substituted) N-acetyl-beta-D-glucosaminylamine and a peptide containing an aspartate residue.. Specifically deglycosylates the denatured form of N-linked glycoproteins in the cytoplasm and assists their proteasome-mediated degradation. Cleaves the beta-aspartyl-glucosamine (GlcNAc) of the glycan and the amide side chain of Asn, converting Asn to Asp. Prefers proteins containing high-mannose over those bearing complex type oligosaccharides. Can recognize misfolded proteins in the endoplasmic reticulum that are exported to the cytosol to be destroyed and deglycosylate them, while it has no activity toward native proteins. Deglycosylation is a prerequisite for subsequent proteasome-mediated degradation of some, but not all, misfolded glycoproteins. This Drosophila melanogaster (Fruit fly) protein is Peptide-N(4)-(N-acetyl-beta-glucosaminyl)asparagine amidase (Pngl).